An 812-amino-acid chain; its full sequence is Plasminogen (812 aa).

Residues 1 to 19 (MDHKEIILLFLLFLKPGQG) form the signal peptide. One can recognise a PAN domain in the interval 20–98 (DSLDGYVSTQ…RDVILFEKRV (79 aa)). 21 disulfide bridges follow: Cys49–Cys73, Cys53–Cys61, Cys103–Cys181, Cys124–Cys164, Cys152–Cys176, Cys185–Cys262, Cys188–Cys316, Cys206–Cys245, Cys234–Cys257, Cys275–Cys352, Cys296–Cys335, Cys324–Cys347, Cys376–Cys454, Cys397–Cys437, Cys425–Cys449, Cys481–Cys560, Cys502–Cys543, Cys531–Cys555, Cys568–Cys687, Cys578–Cys586, and Cys609–Cys625. Kringle domains follow at residues 102 to 181 (ECKT…IPEC), 184 to 262 (ECMY…IPRC), 274 to 352 (QCLK…IPSC), 375 to 454 (ECYQ…LKRC), and 480 to 560 (DCMY…IPLC). Positions 582-810 (VVGGCVANPH…YVNWIEREMR (229 aa)) constitute a Peptidase S1 domain. Ser598 carries the phosphoserine modification. Catalysis depends on charge relay system residues His624 and Asp667. Ser690 carries the post-translational modification Phosphoserine. Cystine bridges form between Cys701–Cys768, Cys731–Cys747, and Cys758–Cys786. The Charge relay system role is filled by Ser762.

The protein belongs to the peptidase S1 family. Plasminogen subfamily. In terms of assembly, interacts (both mature PLG and the angiostatin peptide) with AMOT and CSPG4. Interacts (via the Kringle domains) with HRG; the interaction tethers PLG to the cell surface and enhances its activation. Interacts (via Kringle 4 domain) with ADA; the interaction stimulates PLG activation when in complex with DPP4. Angiostatin: Interacts with ATP5F1A; the interaction inhibits most of the angiogenic effects of angiostatin. In terms of processing, in the presence of the inhibitor, the activation involves only cleavage after Arg-581, yielding two chains held together by two disulfide bonds. In the absence of the inhibitor, the activation involves additionally the removal of the activation peptide.

It is found in the secreted. The enzyme catalyses Preferential cleavage: Lys-|-Xaa &gt; Arg-|-Xaa, higher selectivity than trypsin. Converts fibrin into soluble products.. With respect to regulation, converted into plasmin by plasminogen activators, both plasminogen and its activator being bound to fibrin. Cannot be activated with streptokinase. Plasmin dissolves the fibrin of blood clots and acts as a proteolytic factor in a variety of other processes including embryonic development, tissue remodeling, tumor invasion, and inflammation. In ovulation, weakens the walls of the Graafian follicle. It activates the urokinase-type plasminogen activator, collagenases and several complement zymogens, such as C1, C4 and C5. Cleavage of fibronectin and laminin leads to cell detachment and apoptosis. Also cleaves fibrin, thrombospondin and von Willebrand factor. Its role in tissue remodeling and tumor invasion may be modulated by CSPG4. Binds to cells. Functionally, angiostatin is an angiogenesis inhibitor that blocks neovascularization and growth of experimental primary and metastatic tumors in vivo. The protein is Plasminogen (Plg) of Rattus norvegicus (Rat).